Consider the following 355-residue polypeptide: Protein pelota homolog (355 aa).

Belongs to the eukaryotic release factor 1 family. Pelota subfamily. Monomer. A divalent metal cation is required as a cofactor.

The protein localises to the cytoplasm. Its function is as follows. May function in recognizing stalled ribosomes, interact with stem-loop structures in stalled mRNA molecules, and effect endonucleolytic cleavage of the mRNA. May play a role in the release non-functional ribosomes and degradation of damaged mRNAs. Has endoribonuclease activity. The sequence is that of Protein pelota homolog from Haloarcula marismortui (strain ATCC 43049 / DSM 3752 / JCM 8966 / VKM B-1809) (Halobacterium marismortui).